A 41-amino-acid polypeptide reads, in one-letter code: Large ribosomal subunit protein bL36B (41 aa).

It belongs to the bacterial ribosomal protein bL36 family.

The polypeptide is Large ribosomal subunit protein bL36B (Vibrio campbellii (strain ATCC BAA-1116)).